Consider the following 265-residue polypeptide: Thiazole synthase (265 aa).

The active-site Schiff-base intermediate with DXP is the Lys103. 1-deoxy-D-xylulose 5-phosphate is bound by residues Gly164, 190 to 191 (AG), and 212 to 213 (NT).

This sequence belongs to the ThiG family. Homotetramer. Forms heterodimers with either ThiH or ThiS.

Its subcellular location is the cytoplasm. The catalysed reaction is [ThiS sulfur-carrier protein]-C-terminal-Gly-aminoethanethioate + 2-iminoacetate + 1-deoxy-D-xylulose 5-phosphate = [ThiS sulfur-carrier protein]-C-terminal Gly-Gly + 2-[(2R,5Z)-2-carboxy-4-methylthiazol-5(2H)-ylidene]ethyl phosphate + 2 H2O + H(+). It functions in the pathway cofactor biosynthesis; thiamine diphosphate biosynthesis. Catalyzes the rearrangement of 1-deoxy-D-xylulose 5-phosphate (DXP) to produce the thiazole phosphate moiety of thiamine. Sulfur is provided by the thiocarboxylate moiety of the carrier protein ThiS. In vitro, sulfur can be provided by H(2)S. This Bordetella avium (strain 197N) protein is Thiazole synthase.